A 1140-amino-acid chain; its full sequence is Probable DNA-directed RNA polymerase II subunit RPB2 homolog (1140 aa).

Residue aspartate 773 participates in Mg(2+) binding. The Zn(2+) site is built by cysteine 1092, cysteine 1095, cysteine 1105, and cysteine 1108. A C4-type zinc finger spans residues 1092-1108 (CKDCGMMSSTSKKCHHC).

It belongs to the RNA polymerase beta chain family.

It carries out the reaction RNA(n) + a ribonucleoside 5'-triphosphate = RNA(n+1) + diphosphate. Component of the DNA-dependent RNA polymerase that catalyzes the transcription of DNA into RNA using the four ribonucleoside triphosphates as substrates. Second largest component of RNA polymerase II which synthesizes mRNA precursors and many functional non-coding RNAs. Proposed to contribute to the polymerase catalytic activity and forms the polymerase active center together with the largest subunit. This is Probable DNA-directed RNA polymerase II subunit RPB2 homolog from Invertebrate iridescent virus 3 (IIV-3).